The sequence spans 316 residues: Serine protease 45 (316 aa).

The first 38 residues, 1–38 (MAASLSRLSAGLAASRPLGLSRSFLLLVLLLLNSGYKG), serve as a signal peptide directing secretion. The region spanning 49-290 (WWPKNLDLSR…YSRWIKKQIS (242 aa)) is the Peptidase S1 domain. Cysteines 74 and 90 form a disulfide. The active-site Charge relay system is His-89. An N-linked (GlcNAc...) asparagine glycan is attached at Asn-110. The active-site Charge relay system is the Asp-137. N-linked (GlcNAc...) asparagine glycans are attached at residues Asn-162 and Asn-186. Disulfide bonds link Cys-171-Cys-248, Cys-206-Cys-229, and Cys-238-Cys-266. Ser-242 (charge relay system) is an active-site residue.

The protein belongs to the peptidase S1 family.

The protein resides in the secreted. This Bos taurus (Bovine) protein is Serine protease 45 (PRSS45).